Consider the following 527-residue polypeptide: Bifunctional methyltransferase (527 aa).

The tract at residues 1–309 (MQYSIKQVLS…GHSRVILFSP (309 aa)) is hemK. Residues 1 to 311 (MQYSIKQVLS…SRVILFSPIN (311 aa)) form an RF MTase region. S-adenosyl-L-methionine is bound by residues 149–153 (GTGSG), Asp172, Trp201, Asn216, Glu356, Glu381, Asn408, and Asp430. Residue 216–219 (NPPY) coordinates substrate. The segment at 310 to 527 (INLNRSYARR…IILQHVSGDH (218 aa)) is tRNA (guanine-N(7)-)-methyltransferase. Residues 314–527 (RSYARRIGKS…IILQHVSGDH (214 aa)) are tRNA MTase. Asp430 is a catalytic residue. Residues Lys434 and Asp466 each contribute to the substrate site.

It in the C-terminal section; belongs to the class I-like SAM-binding methyltransferase superfamily. TrmB family. In the N-terminal section; belongs to the protein N5-glutamine methyltransferase family. PrmC subfamily.

It carries out the reaction L-glutaminyl-[peptide chain release factor] + S-adenosyl-L-methionine = N(5)-methyl-L-glutaminyl-[peptide chain release factor] + S-adenosyl-L-homocysteine + H(+). The catalysed reaction is guanosine(46) in tRNA + S-adenosyl-L-methionine = N(7)-methylguanosine(46) in tRNA + S-adenosyl-L-homocysteine. Functionally, methylates the class 1 translation termination release factors RF1/PrfA and RF2/PrfB on the glutamine residue of the universally conserved GGQ motif. Catalyzes the formation of N(7)-methylguanine at position 46 (m7G46) in tRNA. The sequence is that of Bifunctional methyltransferase (prmC/trmB) from Rickettsia felis (strain ATCC VR-1525 / URRWXCal2) (Rickettsia azadi).